A 385-amino-acid polypeptide reads, in one-letter code: GTPase Obg (385 aa).

The Obg domain occupies 1–159 (MKFVDEATIL…REIQLELMLL (159 aa)). In terms of domain architecture, OBG-type G spans 160-333 (ADVGMLGLPN…LCWDVMAFIN (174 aa)). GTP-binding positions include 166 to 173 (GLPNAGKS), 191 to 195 (FTTLV), 213 to 216 (DIPG), 283 to 286 (NKAD), and 314 to 316 (SAA). Residues Ser-173 and Thr-193 each coordinate Mg(2+). Over residues 362–379 (QQEEAEETLDDDWDEDGV) the composition is skewed to acidic residues. The segment at 362 to 385 (QQEEAEETLDDDWDEDGVETIYQR) is disordered.

This sequence belongs to the TRAFAC class OBG-HflX-like GTPase superfamily. OBG GTPase family. Monomer. Requires Mg(2+) as cofactor.

The protein localises to the cytoplasm. Its function is as follows. An essential GTPase which binds GTP, GDP and possibly (p)ppGpp with moderate affinity, with high nucleotide exchange rates and a fairly low GTP hydrolysis rate. Plays a role in control of the cell cycle, stress response, ribosome biogenesis and in those bacteria that undergo differentiation, in morphogenesis control. The polypeptide is GTPase Obg (Sodalis glossinidius (strain morsitans)).